The primary structure comprises 286 residues: Energy-coupling factor transporter ATP-binding protein EcfA2 (286 aa).

The ABC transporter domain occupies 3 to 246 (IRFDNVSYTY…KEKLADWHIA (244 aa)). 40–47 (GQTGSGKS) serves as a coordination point for ATP.

Belongs to the ABC transporter superfamily. Energy-coupling factor EcfA family. As to quaternary structure, forms a stable energy-coupling factor (ECF) transporter complex composed of 2 membrane-embedded substrate-binding proteins (S component), 2 ATP-binding proteins (A component) and 2 transmembrane proteins (T component).

It is found in the cell membrane. Functionally, ATP-binding (A) component of a common energy-coupling factor (ECF) ABC-transporter complex. Unlike classic ABC transporters this ECF transporter provides the energy necessary to transport a number of different substrates. In Staphylococcus aureus (strain bovine RF122 / ET3-1), this protein is Energy-coupling factor transporter ATP-binding protein EcfA2.